Consider the following 132-residue polypeptide: Small ribosomal subunit protein uS8c (132 aa).

It belongs to the universal ribosomal protein uS8 family. In terms of assembly, part of the 30S ribosomal subunit.

Its subcellular location is the plastid. The protein localises to the chloroplast. One of the primary rRNA binding proteins, it binds directly to 16S rRNA central domain where it helps coordinate assembly of the platform of the 30S subunit. In Guillardia theta (Cryptophyte), this protein is Small ribosomal subunit protein uS8c (rps8).